Here is a 238-residue protein sequence, read N- to C-terminus: Tritrans,polycis-undecaprenyl-diphosphate synthase (geranylgeranyl-diphosphate specific) (238 aa).

The active site involves D18. D18 contacts Mg(2+). Residues 19–22 (GNRR) and 64–66 (STE) contribute to the substrate site. The Proton acceptor role is filled by N67. Substrate is bound by residues R70, R187, and 193 to 195 (RLS). E206 serves as a coordination point for Mg(2+).

It belongs to the UPP synthase family. Homodimer. The cofactor is Mg(2+).

The catalysed reaction is geranylgeranyl diphosphate + 7 isopentenyl diphosphate = tri-trans,hepta-cis-undecaprenyl diphosphate + 7 diphosphate. Functionally, catalyzes the sequential condensation of isopentenyl diphosphate (IPP) with geranylgeranyl diphosphate (GGPP) to yield (2Z,6Z,10Z,14Z,18Z,22Z,26Z,30E,34E,38E)-undecaprenyl diphosphate (tritrans,heptacis-UPP). It is probably the precursor of glycosyl carrier lipids. The chain is Tritrans,polycis-undecaprenyl-diphosphate synthase (geranylgeranyl-diphosphate specific) from Pyrobaculum aerophilum (strain ATCC 51768 / DSM 7523 / JCM 9630 / CIP 104966 / NBRC 100827 / IM2).